The chain runs to 340 residues: GTPase Obg (340 aa).

The Obg domain occupies 1 to 158 (MSFIDEAKVY…KWIILKLKII (158 aa)). In terms of domain architecture, OBG-type G spans 159–325 (SDVGIIGLPN…LSILIKHINK (167 aa)). GTP is bound by residues 165-172 (GLPNAGKS), 190-194 (FTTLE), 211-214 (DIPG), 278-281 (NKCD), and 306-308 (SSI). Mg(2+)-binding residues include Ser172 and Thr192.

Belongs to the TRAFAC class OBG-HflX-like GTPase superfamily. OBG GTPase family. In terms of assembly, monomer. Mg(2+) is required as a cofactor.

It localises to the cytoplasm. An essential GTPase which binds GTP, GDP and possibly (p)ppGpp with moderate affinity, with high nucleotide exchange rates and a fairly low GTP hydrolysis rate. Plays a role in control of the cell cycle, stress response, ribosome biogenesis and in those bacteria that undergo differentiation, in morphogenesis control. This is GTPase Obg from Ehrlichia ruminantium (strain Gardel).